A 338-amino-acid chain; its full sequence is Anthranilate phosphoribosyltransferase (338 aa).

Residues Gly-78, 81–82 (GD), Ser-86, 88–91 (NIST), 106–114 (KHGNKSVTS), and Ser-118 contribute to the 5-phospho-alpha-D-ribose 1-diphosphate site. Residue Gly-78 participates in anthranilate binding. Ser-90 lines the Mg(2+) pocket. Residue Asn-109 coordinates anthranilate. Arg-163 provides a ligand contact to anthranilate. Residues Asp-222 and Glu-223 each coordinate Mg(2+).

This sequence belongs to the anthranilate phosphoribosyltransferase family. Homodimer. Mg(2+) serves as cofactor.

The catalysed reaction is N-(5-phospho-beta-D-ribosyl)anthranilate + diphosphate = 5-phospho-alpha-D-ribose 1-diphosphate + anthranilate. The protein operates within amino-acid biosynthesis; L-tryptophan biosynthesis; L-tryptophan from chorismate: step 2/5. Catalyzes the transfer of the phosphoribosyl group of 5-phosphorylribose-1-pyrophosphate (PRPP) to anthranilate to yield N-(5'-phosphoribosyl)-anthranilate (PRA). The polypeptide is Anthranilate phosphoribosyltransferase (Staphylococcus saprophyticus subsp. saprophyticus (strain ATCC 15305 / DSM 20229 / NCIMB 8711 / NCTC 7292 / S-41)).